We begin with the raw amino-acid sequence, 435 residues long: MSYQGRARKFLESASIDVGDMVLVEKPDVTYEGMVLDRADDADDRHIVLKLENGYNIGVEISDARIELLEKGSEPRIELPPVEAAEDPELPDVSIISTGGTVASIIDYRTGAVHPAFTADDLLRANPELLDIANIRGRAVFNILSENMKPEYWVETARAVYGEIKDGADGVVVAHGTDTMHYTSAALSFMLRTPVPVVFTGAQRSSDRPSSDASLNIQCSVRAATSEIAEVTVCMHATMDDLSCHLHRGVKVRKMHTSRRDTFRSMNALPLAEVTPDGIKILEENYRKRGSDELELSDRVEERVAFIKSYPGISPDIIKWHLDEGYRGIVIEGTGLGHCPDTLIPVIGEAHDMGVPVAMTSQCLNGRVNMNVYSTGRRLLQAGVIPCDDMLPEVAYVKMCWVLGQTDDPEMAREMMRENIAGEINERTSIAYFRG.

One can recognise an Asparaginase/glutaminase domain in the interval 91 to 419; that stretch reads PDVSIISTGG…EMAREMMREN (329 aa). Catalysis depends on residues threonine 101, threonine 177, aspartate 178, and lysine 254.

The protein belongs to the asparaginase 1 family. GatD subfamily. Heterodimer of GatD and GatE.

It carries out the reaction L-glutamyl-tRNA(Gln) + L-glutamine + ATP + H2O = L-glutaminyl-tRNA(Gln) + L-glutamate + ADP + phosphate + H(+). Its function is as follows. Allows the formation of correctly charged Gln-tRNA(Gln) through the transamidation of misacylated Glu-tRNA(Gln) in organisms which lack glutaminyl-tRNA synthetase. The reaction takes place in the presence of glutamine and ATP through an activated gamma-phospho-Glu-tRNA(Gln). The GatDE system is specific for glutamate and does not act on aspartate. The polypeptide is Glutamyl-tRNA(Gln) amidotransferase subunit D (gatD) (Methanothermobacter thermautotrophicus (strain ATCC 29096 / DSM 1053 / JCM 10044 / NBRC 100330 / Delta H) (Methanobacterium thermoautotrophicum)).